Reading from the N-terminus, the 182-residue chain is 3-hydroxyanthranilate 3,4-dioxygenase (182 aa).

O2 is bound at residue Arg46. Fe cation contacts are provided by His50, Glu56, and His96. Glu56 provides a ligand contact to substrate. The substrate site is built by Arg100 and Glu111. Fe cation contacts are provided by Cys126, Cys129, Cys163, and Cys166.

This sequence belongs to the 3-HAO family. In terms of assembly, homodimer. Fe(2+) is required as a cofactor.

It carries out the reaction 3-hydroxyanthranilate + O2 = (2Z,4Z)-2-amino-3-carboxymuconate 6-semialdehyde. The protein operates within cofactor biosynthesis; NAD(+) biosynthesis; quinolinate from L-kynurenine: step 3/3. In terms of biological role, catalyzes the oxidative ring opening of 3-hydroxyanthranilate to 2-amino-3-carboxymuconate semialdehyde, which spontaneously cyclizes to quinolinate. The sequence is that of 3-hydroxyanthranilate 3,4-dioxygenase from Brucella anthropi (strain ATCC 49188 / DSM 6882 / CCUG 24695 / JCM 21032 / LMG 3331 / NBRC 15819 / NCTC 12168 / Alc 37) (Ochrobactrum anthropi).